The chain runs to 345 residues: Dihydroorotase (345 aa).

Positions 13 and 15 each coordinate Zn(2+). Substrate-binding positions include histidine 15 to arginine 17 and asparagine 41. The Zn(2+) site is built by lysine 98, histidine 135, and histidine 173. Lysine 98 carries the N6-carboxylysine modification. Residue histidine 135 coordinates substrate. Residue leucine 218 coordinates substrate. Residue aspartate 246 coordinates Zn(2+). Residue aspartate 246 is part of the active site. Substrate is bound by residues histidine 250 and alanine 262.

It belongs to the metallo-dependent hydrolases superfamily. DHOase family. Class II DHOase subfamily. In terms of assembly, homodimer. Zn(2+) serves as cofactor.

It carries out the reaction (S)-dihydroorotate + H2O = N-carbamoyl-L-aspartate + H(+). It functions in the pathway pyrimidine metabolism; UMP biosynthesis via de novo pathway; (S)-dihydroorotate from bicarbonate: step 3/3. Functionally, catalyzes the reversible cyclization of carbamoyl aspartate to dihydroorotate. This chain is Dihydroorotase, found in Shewanella halifaxensis (strain HAW-EB4).